The sequence spans 119 residues: Secreted RxLR effector protein RXLR-C04 (119 aa).

The first 22 residues, 1–22 (MRLSYIFVVVATIITNCDIASA), serve as a signal peptide directing secretion. A RxLR-dEER motif is present at residues 40 to 77 (RILRQTNDSDDLEPIRHAMLDMELLEKIAKDPKYAEEV). Residue N46 is glycosylated (N-linked (GlcNAc...) asparagine).

It belongs to the RxLR effector family.

It is found in the secreted. Its subcellular location is the host cytoplasm. It localises to the host nucleus. In terms of biological role, secreted effector that suppresses pattern-triggered immunity (PTI) in plant host. The protein is Secreted RxLR effector protein RXLR-C04 of Plasmopara halstedii (Downy mildew of sunflower).